A 204-amino-acid polypeptide reads, in one-letter code: High frequency lysogenization protein HflD homolog (204 aa).

Belongs to the HflD family.

Its subcellular location is the cytoplasm. It localises to the cell inner membrane. This Actinobacillus succinogenes (strain ATCC 55618 / DSM 22257 / CCUG 43843 / 130Z) protein is High frequency lysogenization protein HflD homolog.